Reading from the N-terminus, the 88-residue chain is MRSPHITISLVFLFFLFLIIQTHQRTIDQTHQIGSNVQHVSDMAVTSPEGKRRERFRVRRPMTTWLKGKMIGANEHGVPSGPNPISNR.

The N-terminal stretch at 1 to 24 (MRSPHITISLVFLFFLFLIIQTHQ) is a signal peptide. Positions 69-88 (KMIGANEHGVPSGPNPISNR) are disordered. Hydroxyproline occurs at positions 79 and 82. The O-linked (Ara...) hydroxyproline glycan is linked to proline 82.

It belongs to the CLV3/ESR signal peptide family. In terms of processing, the O-glycosylation (arabinosylation) of the hydroxyproline Pro-82 enhances binding affinity of the CLE42p peptide for its receptor. As to expression, expressed at low levels in seedlings, roots and inflorescence.

It localises to the secreted. The protein resides in the extracellular space. In terms of biological role, extracellular signal peptide that regulates cell fate. Represses tracheary element differentiation but promotes the formation of procambial cells. This chain is CLAVATA3/ESR (CLE)-related protein 42, found in Arabidopsis thaliana (Mouse-ear cress).